The sequence spans 194 residues: Coiled-coil domain-containing protein 184 (194 aa).

Residues 39 to 68 (GMKELMEHLKAQLQALFEDVRAMRGALDEQ) are a coiled coil. The tract at residues 101 to 176 (GLGVVGGKGS…LLGGDGPLVE (76 aa)) is disordered. A compositionally biased stretch (acidic residues) spans 135–145 (PEDEEEEEEEK).

The polypeptide is Coiled-coil domain-containing protein 184 (CCDC184) (Homo sapiens (Human)).